The following is a 249-amino-acid chain: L-fucose operon activator (249 aa).

The 56-residue stretch at 1-56 (MNYRDELILQWVNQQGKASVIELAQHCDISVETIRRDLNKLANKGLLHRTHGGAVS) folds into the HTH deoR-type domain. Positions 18–37 (ASVIELAQHCDISVETIRRD) form a DNA-binding region, H-T-H motif.

Its function is as follows. Transcriptional activator of the fuc operon. The sequence is that of L-fucose operon activator (fucR) from Haemophilus influenzae (strain ATCC 51907 / DSM 11121 / KW20 / Rd).